The chain runs to 488 residues: Alpha-ketoglutaric semialdehyde dehydrogenase (488 aa).

NAD(+)-binding positions include lysine 180 and 233 to 238 (GSNQVG). Glutamate 255 acts as the Proton acceptor in catalysis. Catalysis depends on cysteine 289, which acts as the Nucleophile. Positions 336 and 390 each coordinate NAD(+).

This sequence belongs to the aldehyde dehydrogenase family. Homotetramer.

The catalysed reaction is 2,5-dioxopentanoate + NADP(+) + H2O = 2-oxoglutarate + NADPH + 2 H(+). The enzyme catalyses 2,5-dioxopentanoate + NAD(+) + H2O = 2-oxoglutarate + NADH + 2 H(+). Catalyzes the NAD(P)(+)-dependent oxidation of alpha-ketoglutaric semialdehyde (alphaKGSA) to alpha-ketoglutarate. Prefers NADP(+) to NAD(+) as a cosubstrate. In vitro, can also use various aldehydes. This chain is Alpha-ketoglutaric semialdehyde dehydrogenase, found in Bacillus subtilis (strain 168).